A 276-amino-acid polypeptide reads, in one-letter code: uncharacterized protein (276 aa).

The signal sequence occupies residues 1 to 19; it reads MKKWLICSFVLVLLVSFTA. C20 is lipidated: N-palmitoyl cysteine. C20 carries S-diacylglycerol cysteine lipidation.

Belongs to the NlpA lipoprotein family.

Its subcellular location is the cell membrane. This is an uncharacterized protein from Bacillus subtilis (strain 168).